A 194-amino-acid polypeptide reads, in one-letter code: uncharacterized protein (194 aa).

The interval Pro-25–Ser-156 is disordered. A compositionally biased stretch (polar residues) spans Gly-43 to Gln-57. Over residues Ser-104 to Leu-113 the composition is skewed to low complexity.

This is an uncharacterized protein from Homo sapiens (Human).